Reading from the N-terminus, the 841-residue chain is DNA mismatch repair protein MutS (841 aa).

An ATP-binding site is contributed by 596-603 (GPNMSGKS).

Belongs to the DNA mismatch repair MutS family.

This protein is involved in the repair of mismatches in DNA. It is possible that it carries out the mismatch recognition step. This protein has a weak ATPase activity. The polypeptide is DNA mismatch repair protein MutS (Acholeplasma laidlawii (strain PG-8A)).